A 461-amino-acid chain; its full sequence is Bifunctional protein GlmU (461 aa).

A pyrophosphorylase region spans residues 1 to 230; sequence MSKIHAVVLA…PEETLGVNDR (230 aa). UDP-N-acetyl-alpha-D-glucosamine is bound by residues 9 to 12, Lys-23, Gln-73, 78 to 79, 101 to 103, Gly-140, Glu-155, Asn-170, and Asn-228; these read LAAG, GT, and YGD. Asp-103 contributes to the Mg(2+) binding site. Asn-228 contributes to the Mg(2+) binding site. Residues 231–251 are linker; sequence VQLSEAEAYMKKRIMTGHMRN. Positions 252–461 are N-acetyltransferase; sequence GVTIIDPTST…KMPRKGKKQS (210 aa). Positions 333 and 351 each coordinate UDP-N-acetyl-alpha-D-glucosamine. Catalysis depends on His-363, which acts as the Proton acceptor. UDP-N-acetyl-alpha-D-glucosamine contacts are provided by Tyr-366 and Asn-377. Acetyl-CoA is bound by residues 386-387, Ala-423, and Arg-440; that span reads NY.

The protein in the N-terminal section; belongs to the N-acetylglucosamine-1-phosphate uridyltransferase family. This sequence in the C-terminal section; belongs to the transferase hexapeptide repeat family. Homotrimer. Requires Mg(2+) as cofactor.

It localises to the cytoplasm. The enzyme catalyses alpha-D-glucosamine 1-phosphate + acetyl-CoA = N-acetyl-alpha-D-glucosamine 1-phosphate + CoA + H(+). It carries out the reaction N-acetyl-alpha-D-glucosamine 1-phosphate + UTP + H(+) = UDP-N-acetyl-alpha-D-glucosamine + diphosphate. Its pathway is nucleotide-sugar biosynthesis; UDP-N-acetyl-alpha-D-glucosamine biosynthesis; N-acetyl-alpha-D-glucosamine 1-phosphate from alpha-D-glucosamine 6-phosphate (route II): step 2/2. It functions in the pathway nucleotide-sugar biosynthesis; UDP-N-acetyl-alpha-D-glucosamine biosynthesis; UDP-N-acetyl-alpha-D-glucosamine from N-acetyl-alpha-D-glucosamine 1-phosphate: step 1/1. It participates in bacterial outer membrane biogenesis; LPS lipid A biosynthesis. Catalyzes the last two sequential reactions in the de novo biosynthetic pathway for UDP-N-acetylglucosamine (UDP-GlcNAc). The C-terminal domain catalyzes the transfer of acetyl group from acetyl coenzyme A to glucosamine-1-phosphate (GlcN-1-P) to produce N-acetylglucosamine-1-phosphate (GlcNAc-1-P), which is converted into UDP-GlcNAc by the transfer of uridine 5-monophosphate (from uridine 5-triphosphate), a reaction catalyzed by the N-terminal domain. The sequence is that of Bifunctional protein GlmU from Brevibacillus brevis (strain 47 / JCM 6285 / NBRC 100599).